Consider the following 104-residue polypeptide: Large ribosomal subunit protein bL21 (104 aa).

It belongs to the bacterial ribosomal protein bL21 family. As to quaternary structure, part of the 50S ribosomal subunit. Contacts protein L20.

In terms of biological role, this protein binds to 23S rRNA in the presence of protein L20. The chain is Large ribosomal subunit protein bL21 from Granulibacter bethesdensis (strain ATCC BAA-1260 / CGDNIH1).